A 442-amino-acid chain; its full sequence is Lysosomal dipeptide transporter MFSD1 (442 aa).

The Dileucine internalization motif motif lies at 8 to 9 (LL). Helical transmembrane passes span 38–58 (LLVL…YDNP), 85–105 (TVIF…GALV), 107–127 (AFWL…SLAV), 187–207 (LLIG…LAYL), 238–258 (LWLI…FIGL), 276–296 (AINS…GILV), 303–323 (IIWV…LAFT), 333–353 (LLGV…AFVV), 364–384 (FMQS…GMIL), and 390–410 (LFLE…VVML).

It belongs to the major facilitator superfamily. In terms of assembly, homodimer. Interacts with lysosomal protein GLMP (via lumenal domain); the interaction starts while both proteins are still in the endoplasmic reticulum and is required for stabilization of MFSD1 in lysosomes but has no direct effect on its targeting to lysosomes or transporter activity.

The protein localises to the lysosome membrane. It carries out the reaction L-alpha-aminoacyl-L-arginine(out) = L-alpha-aminoacyl-L-arginine(in). The enzyme catalyses L-arginyl-L-alpha-amino acid(out) = L-arginyl-L-alpha-amino acid(in). The catalysed reaction is L-arginyl-glycine(out) = L-arginyl-glycine(in). It catalyses the reaction L-alpha-aminoacyl-L-lysine(out) = L-alpha-aminoacyl-L-lysine(in). It carries out the reaction L-aspartyl-L-lysine(out) = L-aspartyl-L-lysine(in). The enzyme catalyses L-alanyl-L-lysine(out) = L-alanyl-L-lysine(in). The catalysed reaction is L-lysyl-L-alpha-amino acid(out) = L-lysyl-L-alpha-amino acid(in). It catalyses the reaction L-lysyl-L-alanine(out) = L-lysyl-L-alanine(in). It carries out the reaction L-lysyl-L-lysine(out) = L-lysyl-L-lysine(in). The enzyme catalyses L-lysyl-glycine(out) = L-lysyl-glycine(in). The catalysed reaction is L-alpha-aminoacyl-L-histidine(out) = L-alpha-aminoacyl-L-histidine(in). It catalyses the reaction L-histidyl-L-alpha-amino acid(out) = L-histidyl-L-alpha-amino acid(in). It carries out the reaction L-histidyl-glycine(out) = L-histidyl-glycine(in). Lysosomal dipeptide uniporter that selectively exports lysine, arginine or histidine-containing dipeptides with a net positive charge from the lysosome lumen into the cytosol. Could play a role in a specific type of protein O-glycosylation indirectly regulating macrophages migration and tissue invasion. Also essential for liver homeostasis. The polypeptide is Lysosomal dipeptide transporter MFSD1 (Gallus gallus (Chicken)).